The sequence spans 345 residues: MSESDAEETKISTDPVDNAWAMKIPTFREEDNPHGMVEESSFATLFPKYRERYLKEVWPLVEQCLAEHHLKAELDLMEGSMVVRTSRKTWDPYIIIKARDMIKLMARSVPFEQAKRVLQDDIGCDIIKIGNLVHKKEKFVKRRQRLIGPNGATLKSIELLTDCYVLVQGNTVSALGPYKGLQQVRDIVLETMNNVHPIYNIKALMIKRELMKDPRLANEDWSRFLPKFKNKNISKRKQPKVKKQKKEYTPFPPSQPESKVDKQLASGEYFLNQEQKQAKRNQERTEKQKEAAKRQDERRNKDFVPPTEESASSSLKKEDGFSSSKVDVKALKAKLIKANKKARSS.

The KH domain maps to 125-193; that stretch reads DIIKIGNLVH…VRDIVLETMN (69 aa). A compositionally biased stretch (basic residues) spans 232-245; the sequence is NISKRKQPKVKKQK. Disordered regions lie at residues 232-260 and 273-329; these read NISK…ESKV and QEQK…VDVK. Residues 270–298 adopt a coiled-coil conformation; sequence FLNQEQKQAKRNQERTEKQKEAAKRQDER. Basic and acidic residues-rich tracts occupy residues 276–302 and 315–329; these read KQAK…RNKD and LKKE…VDVK.

It belongs to the KRR1 family. As to quaternary structure, monomer. Component of the ribosomal small subunit (SSU) processome.

The protein resides in the nucleus. The protein localises to the nucleolus. In terms of biological role, required for 40S ribosome biogenesis. Involved in nucleolar processing of pre-18S ribosomal RNA and ribosome assembly. Binds to RNA. Required for female germline development, cell viability during eye development and for survival of dividing cells and epithelial cells during early wing disk development. This is KRR1 small subunit processome component homolog from Drosophila erecta (Fruit fly).